Reading from the N-terminus, the 405-residue chain is uncharacterized protein (405 aa).

This is an uncharacterized protein from Equine herpesvirus 2 (strain 86/87) (EHV-2).